The primary structure comprises 89 residues: Transcriptional regulator WhiB2 (89 aa).

Positions 1–15 (MVPEAPAPFEEPLPP) are enriched in pro residues. Residues 1–24 (MVPEAPAPFEEPLPPEATDQWQDR) are disordered. The region spanning 26–83 (LCAQTDPEAFFPEKGGSTREAKKICMGCEVRHECLEYALAHDERFGIWGGLSERERRR) is the 4Fe-4S Wbl-type domain. Position 27 (cysteine 27) interacts with [4Fe-4S] cluster. Phosphoserine is present on serine 42. Cysteine 50, cysteine 53, and cysteine 59 together coordinate [4Fe-4S] cluster.

This sequence belongs to the WhiB family. [4Fe-4S] cluster serves as cofactor. May be phosphorylated, possibly on Ser-42. Post-translationally, the cluster is degraded quickly in the presence of air. Upon cluster removal intramolecular disulfide bonds are formed. In terms of processing, the Fe-S cluster can be nitrosylated by nitric oxide (NO).

It is found in the cytoplasm. In terms of biological role, acts as a transcriptional regulator. Probably redox-responsive. The apo- but not holo-form probably binds DNA. The apo-form functions as a chaperone, preventing aggregation or helping in correct refolding of a number of substrates; this activity does not require ATP or the ability to bind a Fe-S cluster. Chaperone activity is insensitive to the redox state of its cysteine residues. The apo-form has no protein disulfide reductase activity. The apo-form binds to its own promoter. The chain is Transcriptional regulator WhiB2 (whiB2) from Mycobacterium tuberculosis (strain ATCC 25618 / H37Rv).